A 1697-amino-acid chain; its full sequence is SAC3 family protein B (1697 aa).

4 disordered regions span residues 54–134, 167–280, 306–413, and 491–512; these read PPAS…QPGG, QRPN…SRSN, EATR…EQAR, and ESER…VDGD. Over residues 120–134 the composition is skewed to low complexity; that stretch reads QNPSPSSGQPYQPGG. The segment covering 178-192 has biased composition (basic and acidic residues); it reads DGSRNFLKDHGEHSR. Residues 193–202 are compositionally biased toward polar residues; the sequence is ATSPPATSHI. The segment covering 215-227 has biased composition (basic and acidic residues); sequence RSQDSKRKSRSDI. Polar residues-rich tracts occupy residues 233–243, 257–280, and 335–380; these read MGFSRRNQSPV, PLSS…SRSN, and RFST…SPAT. The 189-residue stretch at 625–813 folds into the PCI domain; that stretch reads NIEQMNKTSV…KCSKLVHMKK (189 aa).

The protein belongs to the SAC3 family. In terms of assembly, interacts with SAC3A, EER5 and CML19. Interacts with UCH1 and UCH2.

It is found in the nucleus. Component of the TREX-2 complex (transcription and export complex 2), a muliprotein complex that functions in docking export-competent ribonucleoprotein particles (mRNPs) to the nuclear entrance of the nuclear pore complex (nuclear basket). TREX-2 participates in mRNA export and accurate chromatin positioning in the nucleus by tethering genes to the nuclear periphery. This chain is SAC3 family protein B, found in Arabidopsis thaliana (Mouse-ear cress).